Reading from the N-terminus, the 417-residue chain is NADH-quinone oxidoreductase subunit D (417 aa).

Belongs to the complex I 49 kDa subunit family. In terms of assembly, NDH-1 is composed of 14 different subunits. Subunits NuoB, C, D, E, F, and G constitute the peripheral sector of the complex.

The protein resides in the cell inner membrane. It catalyses the reaction a quinone + NADH + 5 H(+)(in) = a quinol + NAD(+) + 4 H(+)(out). NDH-1 shuttles electrons from NADH, via FMN and iron-sulfur (Fe-S) centers, to quinones in the respiratory chain. The immediate electron acceptor for the enzyme in this species is believed to be ubiquinone. Couples the redox reaction to proton translocation (for every two electrons transferred, four hydrogen ions are translocated across the cytoplasmic membrane), and thus conserves the redox energy in a proton gradient. In Burkholderia thailandensis (strain ATCC 700388 / DSM 13276 / CCUG 48851 / CIP 106301 / E264), this protein is NADH-quinone oxidoreductase subunit D.